A 907-amino-acid polypeptide reads, in one-letter code: Dual serine/threonine and tyrosine protein kinase (907 aa).

Residues 373 to 409 (RKKENELYESLMNIANRKQEEMKDMIVETLNTMKEEL) adopt a coiled-coil conformation. The region spanning 630-884 (PKLGQELGRG…PLLGIVQPML (255 aa)) is the Protein kinase domain. Residues 636–644 (LGRGQYGVV) and lysine 659 each bind ATP. The active-site Proton acceptor is the aspartate 755.

This sequence belongs to the protein kinase superfamily. Ser/Thr protein kinase family.

The protein resides in the cytoplasm. It is found in the cell membrane. Its subcellular location is the apical cell membrane. It localises to the basolateral cell membrane. The protein localises to the cell junction. It catalyses the reaction L-seryl-[protein] + ATP = O-phospho-L-seryl-[protein] + ADP + H(+). It carries out the reaction L-threonyl-[protein] + ATP = O-phospho-L-threonyl-[protein] + ADP + H(+). The catalysed reaction is L-tyrosyl-[protein] + ATP = O-phospho-L-tyrosyl-[protein] + ADP + H(+). In terms of biological role, acts as a positive regulator of ERK phosphorylation downstream of fibroblast growth factor-receptor activation. Involved in the regulation of both caspase-dependent apoptosis and caspase-independent cell death. In the skin, it plays a predominant role in suppressing caspase-dependent apoptosis in response to UV stress in a range of dermal cell types. In Macaca mulatta (Rhesus macaque), this protein is Dual serine/threonine and tyrosine protein kinase.